We begin with the raw amino-acid sequence, 575 residues long: Trihelix transcription factor GT-2 (575 aa).

Residues 1-11 (MSGNSEGLLES) show a composition bias toward low complexity. Disordered stretches follow at residues 1 to 44 (MSGN…RWPR), 157 to 181 (IPWI…HQVS), 232 to 256 (FSSS…SSRK), and 339 to 364 (GGQP…DHSI). Residues 40-98 (NRWPRPETLALLRIRSEMDKAFRDSTLKAPLWEEISRKMMELGYKRSSKKCKEKFENVY) form the Myb-like 1 domain. Composition is skewed to low complexity over residues 161–172 (SSSNPSTEKSSS) and 232–241 (FSSSTSSSTA). The segment covering 355-364 (RKQYQSDHSI) has biased composition (polar residues). The 65-residue stretch at 390 to 454 (SVSPSSSRWP…RCKEKWENIN (65 aa)) folds into the Myb-like 2 domain. Residues 513–575 (TQTEFETDQR…PMDINNNLFT (63 aa)) form a disordered region. Over residues 528 to 555 (KEDEEEGESEEDEYDEEEEGEGDNETSE) the composition is skewed to acidic residues. A compositionally biased stretch (polar residues) spans 561 to 575 (NKTSSPMDINNNLFT).

Its subcellular location is the nucleus. In terms of biological role, probable transcription factor that binds specific DNA sequence. The chain is Trihelix transcription factor GT-2 (GT-2) from Arabidopsis thaliana (Mouse-ear cress).